Reading from the N-terminus, the 159-residue chain is Deoxyuridine 5'-triphosphate nucleotidohydrolase (159 aa).

Substrate is bound by residues 78–80, Asn-91, 95–97, and Met-105; these read RSG and LID.

This sequence belongs to the dUTPase family. Mg(2+) serves as cofactor.

The enzyme catalyses dUTP + H2O = dUMP + diphosphate + H(+). It functions in the pathway pyrimidine metabolism; dUMP biosynthesis; dUMP from dCTP (dUTP route): step 2/2. Functionally, this enzyme is involved in nucleotide metabolism: it produces dUMP, the immediate precursor of thymidine nucleotides and it decreases the intracellular concentration of dUTP so that uracil cannot be incorporated into DNA. The sequence is that of Deoxyuridine 5'-triphosphate nucleotidohydrolase from Buchnera aphidicola subsp. Schizaphis graminum (strain Sg).